The primary structure comprises 192 residues: UPF0312 protein Psyr_0457 (192 aa).

Positions 1-23 are cleaved as a signal peptide; it reads MLKKSLAALALGTALLSAGQAMA.

It belongs to the UPF0312 family. Type 1 subfamily.

It is found in the periplasm. This is UPF0312 protein Psyr_0457 from Pseudomonas syringae pv. syringae (strain B728a).